A 278-amino-acid polypeptide reads, in one-letter code: Heat stress transcription factor C-2b (278 aa).

Residues 105–114 show a composition bias toward gly residues; it reads AAGGGGGGGG. The tract at residues 105-132 is disordered; the sequence is AAGGGGGGGGGKRRDASADGGGGGGDED. A hydrophobic repeat HR-A/B region spans residues 143–179; the sequence is LKQEQRTIDDRVAAMWRRVQETERRPKQMLAFLLKVV. The short motif at 219–222 is the Nuclear localization signal element; sequence KRAR.

The protein belongs to the HSF family. Class C subfamily. As to quaternary structure, homotrimer. Exhibits temperature-dependent phosphorylation.

It is found in the nucleus. Functionally, transcriptional regulator that specifically binds DNA of heat shock promoter elements (HSE). This is Heat stress transcription factor C-2b (HSFC2B) from Oryza sativa subsp. japonica (Rice).